The sequence spans 469 residues: Glutamate--tRNA ligase (469 aa).

The 'HIGH' region motif lies at 9-19 (PSPTGFLHVGG). A 'KMSKS' region motif is present at residues 236 to 240 (KLSKR). Lysine 239 lines the ATP pocket.

It belongs to the class-I aminoacyl-tRNA synthetase family. Glutamate--tRNA ligase type 1 subfamily. In terms of assembly, monomer.

Its subcellular location is the cytoplasm. The enzyme catalyses tRNA(Glu) + L-glutamate + ATP = L-glutamyl-tRNA(Glu) + AMP + diphosphate. In terms of biological role, catalyzes the attachment of glutamate to tRNA(Glu) in a two-step reaction: glutamate is first activated by ATP to form Glu-AMP and then transferred to the acceptor end of tRNA(Glu). This Pseudoalteromonas atlantica (strain T6c / ATCC BAA-1087) protein is Glutamate--tRNA ligase.